The primary structure comprises 458 residues: Protein RICE SALT SENSITIVE 3 (458 aa).

Over residues 1-17 (MVGSGAAGGGGGGGGGG) the composition is skewed to gly residues. Disordered regions lie at residues 1 to 21 (MVGS…DHAR), 220 to 325 (TSPS…PEGD), 354 to 374 (GGGA…GHGG), and 386 to 458 (SHSN…TFLE). Residues 220 to 232 (TSPSPSSFPLKQQ) are compositionally biased toward low complexity. The span at 245–262 (HAPPQLPPGASPLFPPGP) shows a compositional bias: pro residues. The segment covering 308–317 (QQPMAAPQQH) has biased composition (low complexity). A compositionally biased stretch (low complexity) spans 413–436 (SSSTTSTSPSVSASTAPAPPQQQQ).

Interacts with BHLH094, BHLH089, TIFY11A/JAZ9 and TIFY11C/JAZ11. Forms a ternary complex with TIFY11A/JAZ9 and BHLH094 in the nucleus. In terms of tissue distribution, expressed in root tips. Expressed at high levels in the meristematic zone and at low levels in the elongation zone of the root tip.

It localises to the nucleus. The protein localises to the cytoplasm. In terms of biological role, involved in the repression of jasmonate (JA)-induced genes. Forms a ternary complex with TIFY11A/JAZ9 and BHLH094 to negatively regulate JA-responsive genes. Involved in transcriptional regulation in the root tip. Plays a regulatory role in root cell elongation. Regulates root cell elongation during salt stress. The polypeptide is Protein RICE SALT SENSITIVE 3 (Oryza sativa subsp. japonica (Rice)).